Here is a 252-residue protein sequence, read N- to C-terminus: Centriole, cilia and spindle-associated protein (252 aa).

The residue at position 1 (M1) is an N-acetylmethionine. The short motif at 9 to 15 is the ST]-E-Y-X(3)-Y motif 1; required for efficient microtubule binding and stabilization element; it reads SEYMKRY. Residues 49 to 163 are disordered; the sequence is WDAWGPDSPS…RSTSKIKENK (115 aa). The span at 54-64 shows a compositional bias: low complexity; it reads PDSPSDSSASP. Phosphoserine is present on S65. A compositionally biased stretch (basic and acidic residues) spans 108 to 125; sequence PKKDTEEKPEEHKTKETD. S191 carries the phosphoserine modification. The ST]-E-Y-X(3)-Y motif 2; required for efficient microtubule binding and stabilization signature appears at 242–248; that stretch reads TEYMRCY.

Belongs to the CCSAP family. As to quaternary structure, associates with microtubules; the association occurs on polyglutamylated tubulin.

The protein resides in the cytoplasm. Its subcellular location is the cytoskeleton. The protein localises to the microtubule organizing center. It is found in the centrosome. It localises to the centriole. The protein resides in the spindle. Its subcellular location is the cilium basal body. The protein localises to the cilium axoneme. It is found in the cell projection. It localises to the axon. The protein resides in the cilium. In terms of biological role, plays a role in microtubule (MT) stabilization and this stabilization involves the maintenance of NUMA1 at the spindle poles. Colocalizes with polyglutamylated MTs to promote MT stabilization and regulate bipolar spindle formation in mitosis. Binding of CCSAP to centrosomes and the spindle around centrosomes during mitosis inhibits MT depolymerization, thereby stabilizing the mitotic spindle. May play a role in embryonic development. May be required for proper cilia beating. This chain is Centriole, cilia and spindle-associated protein (Ccsap), found in Mus musculus (Mouse).